We begin with the raw amino-acid sequence, 191 residues long: Small ribosomal subunit protein uS7 (191 aa).

It belongs to the universal ribosomal protein uS7 family. Part of the 30S ribosomal subunit.

One of the primary rRNA binding proteins, it binds directly to 16S rRNA where it nucleates assembly of the head domain of the 30S subunit. Is located at the subunit interface close to the decoding center. The protein is Small ribosomal subunit protein uS7 of Methanocaldococcus jannaschii (strain ATCC 43067 / DSM 2661 / JAL-1 / JCM 10045 / NBRC 100440) (Methanococcus jannaschii).